We begin with the raw amino-acid sequence, 102 residues long: UPF0473 protein SERP1179 (102 aa).

It belongs to the UPF0473 family.

This Staphylococcus epidermidis (strain ATCC 35984 / DSM 28319 / BCRC 17069 / CCUG 31568 / BM 3577 / RP62A) protein is UPF0473 protein SERP1179.